Here is a 126-residue protein sequence, read N- to C-terminus: Large ribosomal subunit protein bL12 (126 aa).

It belongs to the bacterial ribosomal protein bL12 family. In terms of assembly, homodimer. Part of the ribosomal stalk of the 50S ribosomal subunit. Forms a multimeric L10(L12)X complex, where L10 forms an elongated spine to which 2 to 4 L12 dimers bind in a sequential fashion. Binds GTP-bound translation factors.

Functionally, forms part of the ribosomal stalk which helps the ribosome interact with GTP-bound translation factors. Is thus essential for accurate translation. This is Large ribosomal subunit protein bL12 from Blochmanniella floridana.